Reading from the N-terminus, the 466-residue chain is 3-isopropylmalate dehydratase large subunit (466 aa).

Positions 349, 410, and 413 each coordinate [4Fe-4S] cluster.

The protein belongs to the aconitase/IPM isomerase family. LeuC type 1 subfamily. In terms of assembly, heterodimer of LeuC and LeuD. The cofactor is [4Fe-4S] cluster.

It catalyses the reaction (2R,3S)-3-isopropylmalate = (2S)-2-isopropylmalate. It functions in the pathway amino-acid biosynthesis; L-leucine biosynthesis; L-leucine from 3-methyl-2-oxobutanoate: step 2/4. Its function is as follows. Catalyzes the isomerization between 2-isopropylmalate and 3-isopropylmalate, via the formation of 2-isopropylmaleate. The chain is 3-isopropylmalate dehydratase large subunit from Vesicomyosocius okutanii subsp. Calyptogena okutanii (strain HA).